We begin with the raw amino-acid sequence, 400 residues long: NADH-quinone oxidoreductase subunit D (400 aa).

It belongs to the complex I 49 kDa subunit family. In terms of assembly, NDH-1 is composed of 14 different subunits. Subunits NuoB, C, D, E, F, and G constitute the peripheral sector of the complex.

The protein localises to the cell inner membrane. It catalyses the reaction a quinone + NADH + 5 H(+)(in) = a quinol + NAD(+) + 4 H(+)(out). Its function is as follows. NDH-1 shuttles electrons from NADH, via FMN and iron-sulfur (Fe-S) centers, to quinones in the respiratory chain. The immediate electron acceptor for the enzyme in this species is believed to be a menaquinone. Couples the redox reaction to proton translocation (for every two electrons transferred, four hydrogen ions are translocated across the cytoplasmic membrane), and thus conserves the redox energy in a proton gradient. The sequence is that of NADH-quinone oxidoreductase subunit D from Chlorobaculum parvum (strain DSM 263 / NCIMB 8327) (Chlorobium vibrioforme subsp. thiosulfatophilum).